Reading from the N-terminus, the 211-residue chain is MTVITEEQLGNPAIYQYLLKLVGEEGLELLRRWSDVSYARRWVEEKLSSEDLKAADKARFLAESRRSDEDLVEAERSDEEIAELTGINLNSVRHTLYNLYEHRLAEYRRIKNNETGWLTYLWLMRMDHMNMVLRNEMEVAAGKLAGRLRYDEANDFYQCKNCGITTTFNNAMTTNFSCPQCGTMLVHFDDELIITALKKRLAKMQTALDNA.

One can recognise an HTH TFE/IIEalpha-type domain in the interval 10–130 (GNPAIYQYLL…LWLMRMDHMN (121 aa)).

This sequence belongs to the TFE family. Monomer. Interaction with RNA polymerase subunits RpoF and RpoE is necessary for Tfe stimulatory transcription activity. Able to interact with Tbp and RNA polymerase in the absence of DNA promoter. Interacts both with the preinitiation and elongation complexes.

Functionally, transcription factor that plays a role in the activation of archaeal genes transcribed by RNA polymerase. Facilitates transcription initiation by enhancing TATA-box recognition by TATA-box-binding protein (Tbp), and transcription factor B (Tfb) and RNA polymerase recruitment. Not absolutely required for transcription in vitro, but particularly important in cases where Tbp or Tfb function is not optimal. It dynamically alters the nucleic acid-binding properties of RNA polymerases by stabilizing the initiation complex and destabilizing elongation complexes. Seems to translocate with the RNA polymerase following initiation and acts by binding to the non template strand of the transcription bubble in elongation complexes. In Methanocorpusculum labreanum (strain ATCC 43576 / DSM 4855 / Z), this protein is Transcription factor E.